Reading from the N-terminus, the 125-residue chain is Large ribosomal subunit protein bL12 (125 aa).

The protein belongs to the bacterial ribosomal protein bL12 family. Homodimer. Part of the ribosomal stalk of the 50S ribosomal subunit. Forms a multimeric L10(L12)X complex, where L10 forms an elongated spine to which 2 to 4 L12 dimers bind in a sequential fashion. Binds GTP-bound translation factors.

Its function is as follows. Forms part of the ribosomal stalk which helps the ribosome interact with GTP-bound translation factors. Is thus essential for accurate translation. The chain is Large ribosomal subunit protein bL12 from Polaromonas naphthalenivorans (strain CJ2).